Reading from the N-terminus, the 118-residue chain is Large ribosomal subunit protein bL20 (118 aa).

Belongs to the bacterial ribosomal protein bL20 family.

Its function is as follows. Binds directly to 23S ribosomal RNA and is necessary for the in vitro assembly process of the 50S ribosomal subunit. It is not involved in the protein synthesizing functions of that subunit. The protein is Large ribosomal subunit protein bL20 of Bacillus anthracis (strain CDC 684 / NRRL 3495).